The primary structure comprises 147 residues: Ubiquitin-conjugating enzyme E2 D4 (147 aa).

The UBC core domain maps to 1–147; sequence MALKRIQKEL…AREWTQKYAM (147 aa). Cys-85 serves as the catalytic Glycyl thioester intermediate.

Belongs to the ubiquitin-conjugating enzyme family.

The catalysed reaction is S-ubiquitinyl-[E1 ubiquitin-activating enzyme]-L-cysteine + [E2 ubiquitin-conjugating enzyme]-L-cysteine = [E1 ubiquitin-activating enzyme]-L-cysteine + S-ubiquitinyl-[E2 ubiquitin-conjugating enzyme]-L-cysteine.. It participates in protein modification; protein ubiquitination. In terms of biological role, accepts ubiquitin from the E1 complex and catalyzes its covalent attachment to other proteins. In vitro able to promote polyubiquitination using all 7 ubiquitin Lys residues, but may prefer 'Lys-11' and 'Lys-48'-linked polyubiquitination. The protein is Ubiquitin-conjugating enzyme E2 D4 (UBE2D4) of Homo sapiens (Human).